The following is a 227-amino-acid chain: uncharacterized protein (227 aa).

Helical transmembrane passes span 7-24 (FVYA…VTWA) and 135-157 (VVVI…LMCL).

The protein belongs to the TMEM9 family.

Its subcellular location is the membrane. This is an uncharacterized protein from Drosophila melanogaster (Fruit fly).